Consider the following 237-residue polypeptide: Orotidine 5'-phosphate decarboxylase (237 aa).

Residues aspartate 17, lysine 39, 66–75, threonine 121, arginine 182, glutamine 191, glycine 211, and arginine 212 contribute to the substrate site; that span reads DLKLHDIGNT. The active-site Proton donor is lysine 68.

This sequence belongs to the OMP decarboxylase family. Type 1 subfamily. Homodimer.

It carries out the reaction orotidine 5'-phosphate + H(+) = UMP + CO2. It participates in pyrimidine metabolism; UMP biosynthesis via de novo pathway; UMP from orotate: step 2/2. Its function is as follows. Catalyzes the decarboxylation of orotidine 5'-monophosphate (OMP) to uridine 5'-monophosphate (UMP). The protein is Orotidine 5'-phosphate decarboxylase of Rhodopseudomonas palustris (strain ATCC BAA-98 / CGA009).